The chain runs to 432 residues: Keratin, type I cytoskeletal 18-B (432 aa).

Over residues 1 to 21 (MSYSRSMYSSSSVVGGSPYRS) the composition is skewed to low complexity. The interval 1–44 (MSYSRSMYSSSSVVGGSPYRSLSSAPRFAPGSSAASVHAGPGGS) is disordered. Residues 2–82 (SYSRSMYSSS…NVSLMGGAQN (81 aa)) form a head region. The interval 83–118 (EKETMQDLNDRLASYLERVRSLETANKELEVQIRQH) is coil 1A. In terms of domain architecture, IF rod spans 83–393 (EKETMQDLND…RLLEGDSFDL (311 aa)). The interval 119–134 (TEKKGPAKDWSPYYKA) is linker 1. The interval 135–226 (IEDLKKQVFD…KNHQDDVNEL (92 aa)) is coil 1B. The interval 227–250 (QAQIARSAVTVEVDAPKSQDLGKI) is linker 12. The coil 2 stretch occupies residues 251–388 (MAELRAQYDG…IHTYRRLLEG (138 aa)). The segment at 389-432 (DSFDLQDAVPTVTTQTVKKVITTTQRIVDGKVVAESNDTEVLKA) is tail.

It belongs to the intermediate filament family. Heterotetramer of two type I and two type II keratins. Keratin-18 associates with keratin-8. Post-translationally, phosphorylated. In terms of processing, proteolytically cleaved by caspases during epithelial cell apoptosis.

Functionally, when phosphorylated, plays a role in filament reorganization. This is Keratin, type I cytoskeletal 18-B (krt18-b) from Xenopus laevis (African clawed frog).